A 481-amino-acid chain; its full sequence is UDP-N-acetylmuramate--L-alanine ligase (481 aa).

Residue 122–128 (GVHGKTT) coordinates ATP.

The protein belongs to the MurCDEF family.

It localises to the cytoplasm. The enzyme catalyses UDP-N-acetyl-alpha-D-muramate + L-alanine + ATP = UDP-N-acetyl-alpha-D-muramoyl-L-alanine + ADP + phosphate + H(+). It participates in cell wall biogenesis; peptidoglycan biosynthesis. Its function is as follows. Cell wall formation. The sequence is that of UDP-N-acetylmuramate--L-alanine ligase from Treponema pallidum (strain Nichols).